A 505-amino-acid polypeptide reads, in one-letter code: Lysine--tRNA ligase (505 aa).

Residues Glu415 and Glu422 each coordinate Mg(2+).

It belongs to the class-II aminoacyl-tRNA synthetase family. Homodimer. Requires Mg(2+) as cofactor.

The protein resides in the cytoplasm. It carries out the reaction tRNA(Lys) + L-lysine + ATP = L-lysyl-tRNA(Lys) + AMP + diphosphate. This chain is Lysine--tRNA ligase, found in Cronobacter sakazakii (strain ATCC BAA-894) (Enterobacter sakazakii).